A 142-amino-acid polypeptide reads, in one-letter code: Transcription antitermination protein NusB (142 aa).

Belongs to the NusB family.

Involved in transcription antitermination. Required for transcription of ribosomal RNA (rRNA) genes. Binds specifically to the boxA antiterminator sequence of the ribosomal RNA (rrn) operons. This chain is Transcription antitermination protein NusB, found in Actinobacillus succinogenes (strain ATCC 55618 / DSM 22257 / CCUG 43843 / 130Z).